We begin with the raw amino-acid sequence, 817 residues long: LPS-assembly protein LptD (817 aa).

Residues 1 to 26 (MPALVVSPDLVRGAAGASAAPTPAPA) form the signal peptide. Residues 1 to 101 (MPALVVSPDL…ARKPGSTEVR (101 aa)) form a disordered region. Residues 13 to 90 (GAAGASAAPT…PAASASPADA (78 aa)) are compositionally biased toward low complexity.

Belongs to the LptD family. Component of the lipopolysaccharide transport and assembly complex. Interacts with LptE and LptA.

It localises to the cell outer membrane. Its function is as follows. Together with LptE, is involved in the assembly of lipopolysaccharide (LPS) at the surface of the outer membrane. In Azoarcus sp. (strain BH72), this protein is LPS-assembly protein LptD.